The primary structure comprises 388 residues: S-adenosylmethionine synthase (388 aa).

Residue histidine 16 coordinates ATP. Aspartate 18 provides a ligand contact to Mg(2+). Glutamate 44 contacts K(+). Positions 57 and 100 each coordinate L-methionine. Positions 100 to 110 are flexible loop; it reads QSPDIAQGVNE. ATP is bound by residues 167–169, 233–234, aspartate 242, 248–249, and lysine 269; these read DGK, RF, and RK. L-methionine is bound at residue aspartate 242. Lysine 273 contacts L-methionine.

The protein belongs to the AdoMet synthase family. In terms of assembly, homotetramer; dimer of dimers. Requires Mg(2+) as cofactor. K(+) is required as a cofactor.

The protein localises to the cytoplasm. It catalyses the reaction L-methionine + ATP + H2O = S-adenosyl-L-methionine + phosphate + diphosphate. Its pathway is amino-acid biosynthesis; S-adenosyl-L-methionine biosynthesis; S-adenosyl-L-methionine from L-methionine: step 1/1. Functionally, catalyzes the formation of S-adenosylmethionine (AdoMet) from methionine and ATP. The overall synthetic reaction is composed of two sequential steps, AdoMet formation and the subsequent tripolyphosphate hydrolysis which occurs prior to release of AdoMet from the enzyme. The chain is S-adenosylmethionine synthase from Desulfosudis oleivorans (strain DSM 6200 / JCM 39069 / Hxd3) (Desulfococcus oleovorans).